A 387-amino-acid chain; its full sequence is Odorant receptor 19a (387 aa).

Over Met-1–Tyr-40 the chain is Cytoplasmic. A helical transmembrane segment spans residues Ser-41–Leu-61. The Extracellular portion of the chain corresponds to Gln-62 to Glu-71. The chain crosses the membrane as a helical span at residues Ser-72–Met-92. The Cytoplasmic segment spans residues Arg-93–Glu-127. Residues Phe-128–Ile-148 form a helical membrane-spanning segment. Residues Ser-149–Ser-171 lie on the Extracellular side of the membrane. The chain crosses the membrane as a helical span at residues Ala-172 to Leu-192. Over Asn-193–Ser-254 the chain is Cytoplasmic. The chain crosses the membrane as a helical span at residues Leu-255–Tyr-275. Topologically, residues Phe-276–Met-285 are extracellular. A helical transmembrane segment spans residues Arg-286–Tyr-306. Residues Thr-307–Arg-336 lie on the Cytoplasmic side of the membrane. Residues Leu-337–Val-357 traverse the membrane as a helical segment. Residues Pro-358 to Glu-387 lie on the Extracellular side of the membrane.

The protein belongs to the insect chemoreceptor superfamily. Heteromeric odorant receptor channel (TC 1.A.69) family. Or2a subfamily. Interacts with Orco. Complexes exist early in the endomembrane system in olfactory sensory neurons (OSNs), coupling these complexes to the conserved ciliary trafficking pathway. As to expression, expressed in ai2A olfactory sensory neurons in the antenna.

It is found in the cell membrane. Its function is as follows. Odorant receptor which mediates acceptance or avoidance behavior, depending on its substrates. The odorant receptor repertoire encodes a large collection of odor stimuli that vary widely in identity, intensity, and duration. May form a complex with Orco to form odorant-sensing units, providing sensitive and prolonged odorant signaling and calcium permeability. Involved in the preference for citrus fruits for oviposition, especially through the response to valencene, the primary ligand of Or19a. Larvae growing on citrus fruits suffer a reduced risk of parasitism since endoparasitoid wasps that parasitize larvae are strongly repelled by the smell of citrus, as well as by valencene. In Drosophila melanogaster (Fruit fly), this protein is Odorant receptor 19a (Or19a).